Reading from the N-terminus, the 536-residue chain is CTP synthase (536 aa).

The interval 1 to 267 (MSKFVFVTGG…CKETLNYLEL (267 aa)) is amidoligase domain. Serine 13 is a CTP binding site. Serine 13 is a UTP binding site. ATP contacts are provided by residues 14-19 (SIGKGI) and aspartate 71. Mg(2+) is bound by residues aspartate 71 and glutamate 141. CTP is bound by residues 148-150 (DIE), 188-193 (KTKPTQ), and lysine 224. UTP contacts are provided by residues 188-193 (KTKPTQ) and lysine 224. Residues 292-534 (KVALVGKYIE…IKASQDKLTQ (243 aa)) form the Glutamine amidotransferase type-1 domain. L-glutamine is bound at residue glycine 354. Cysteine 381 (nucleophile; for glutamine hydrolysis) is an active-site residue. L-glutamine is bound by residues 382–385 (LGMQ), glutamate 405, and arginine 462. Residues histidine 507 and glutamate 509 contribute to the active site.

Belongs to the CTP synthase family. Homotetramer.

The enzyme catalyses UTP + L-glutamine + ATP + H2O = CTP + L-glutamate + ADP + phosphate + 2 H(+). It catalyses the reaction L-glutamine + H2O = L-glutamate + NH4(+). It carries out the reaction UTP + NH4(+) + ATP = CTP + ADP + phosphate + 2 H(+). The protein operates within pyrimidine metabolism; CTP biosynthesis via de novo pathway; CTP from UDP: step 2/2. Its activity is regulated as follows. Allosterically activated by GTP, when glutamine is the substrate; GTP has no effect on the reaction when ammonia is the substrate. The allosteric effector GTP functions by stabilizing the protein conformation that binds the tetrahedral intermediate(s) formed during glutamine hydrolysis. Inhibited by the product CTP, via allosteric rather than competitive inhibition. Functionally, catalyzes the ATP-dependent amination of UTP to CTP with either L-glutamine or ammonia as the source of nitrogen. Regulates intracellular CTP levels through interactions with the four ribonucleotide triphosphates. The sequence is that of CTP synthase from Prochlorococcus marinus (strain MIT 9301).